The following is a 43-amino-acid chain: Mu-conotoxin-like CalTx 12.2.1E (43 aa).

R1 is a propeptide. 4 disulfides stabilise this stretch: C4-C16, C11-C24, C18-C29, and C23-C35. 6'-bromotryptophan is present on W31. The residue at position 36 (P36) is a 4-hydroxyproline. W40 is modified (6'-bromotryptophan).

As to expression, expressed by the venom duct.

It is found in the secreted. In terms of biological role, mu-conotoxins block voltage-gated sodium channels. This toxin reversibly blocks voltage-gated sodium channel in cephalopods, with no alteration in the voltage dependence of sodium conductance or on the kinetics of inactivation. This is Mu-conotoxin-like CalTx 12.2.1E from Californiconus californicus (California cone).